Consider the following 705-residue polypeptide: Kinesin-like protein KIF2A (705 aa).

A globular region spans residues 1 to 216 (MATANFGKIQ…LDYRPLTTAD (216 aa)). Residues 65 to 186 (DLVPDEDIEP…QELREKRAQD (122 aa)) form a disordered region. Ser75 bears the Phosphoserine mark. Thr96 carries the phosphothreonine modification. Lys101 is subject to N6-acetyllysine. Over residues 122 to 139 (LPEQSSSAQQNGSVSDIS) the composition is skewed to polar residues. Ser134 and Ser139 each carry phosphoserine. A compositionally biased stretch (basic and acidic residues) spans 158–186 (CVKEVEKLQEKREKRRLQQQELREKRAQD). The Kinesin motor domain maps to 222 to 552 (RICVCVRKRP…LRYANRVKEL (331 aa)). 312-319 (GQTGSGKT) is an ATP binding site. Residues Thr528 and Tyr545 each carry the phosphoserine modification. Positions 659–698 (ATQLEAILEQKIDILTELRDKVKSFRAALQEEEQASKQIN) form a coiled coil.

Belongs to the TRAFAC class myosin-kinesin ATPase superfamily. Kinesin family. MCAK/KIF2 subfamily. Interacts with AURKA and PLK1. Interacts with PSRC1. Interacts with MCRS1; the interaction enhances recruitment of KIF2A to the minus ends of spindle microtubules which promotes chromosome alignment. Highest level in lung. High level in ovary, moderate levels in heart, kidney, placenta, skeletal muscle and spleen (at protein level). Pancreas and spleen express a shorter isoform (at protein level). Expressed in the flagellum of elongated spermatids and sperm in the testis lumen (at protein level). Isoform 1 expressed in neuronal cells. Isoform 2 expressed in astrocytes and fibroblasts.

The protein resides in the cytoplasm. The protein localises to the cytoskeleton. Its subcellular location is the microtubule organizing center. It localises to the centrosome. It is found in the spindle pole. The protein resides in the spindle. The protein localises to the lysosome. In terms of biological role, plus end-directed microtubule-dependent motor required for normal brain development. May regulate microtubule dynamics during axonal growth. Required for normal progression through mitosis. Required for normal congress of chromosomes at the metaphase plate. Required for normal spindle dynamics during mitosis. Promotes spindle turnover. Implicated in formation of bipolar mitotic spindles. Has microtubule depolymerization activity. This is Kinesin-like protein KIF2A (Kif2a) from Mus musculus (Mouse).